Reading from the N-terminus, the 225-residue chain is Esterase OVCA2 (225 aa).

Residues serine 119, aspartate 177, and histidine 204 each act as charge relay system in the active site.

The protein belongs to the LovG family. Strongly expressed in kidney and liver. Moderately expressed in brain, skin and testis. Weakly expressed in heart, lung, small intestine, spleen, stomach and thymus.

The enzyme catalyses a carboxylic ester + H2O = an alcohol + a carboxylate + H(+). Exhibits ester hydrolase activity with a strong preference for long-chain alkyl ester substrates and high selectivity against a variety of short, branched, and substituted esters. Is able to hydrolyze ester bonds within a wide range of p-nitrophenyl derivatives (C2-C14) in vitro, with a strong preference toward substrates of &gt;8 carbons. The polypeptide is Esterase OVCA2 (Ovca2) (Mus musculus (Mouse)).